The following is a 1157-amino-acid chain: uncharacterized protein (1157 aa).

An N-terminal signal peptide occupies residues 1–18 (MNRNIFITLLISLLALSG). The N-palmitoyl cysteine moiety is linked to residue Cys-19. A lipid anchor (S-diacylglycerol cysteine) is attached at Cys-19. Transmembrane regions (helical) follow at residues 292-312 (LSVSALLTLYIMFTGFSFLIG), 394-414 (LGFIYIILYLIALYFIFLLIF), 423-443 (ALITIGMIITMAPIFICFMLF), and 458-478 (ISYAIQPIILFVGIAFIGMII). The segment at 1134 to 1157 (QYQKPVENSGRKLRKLEDHLRNMK) is disordered. Residues 1148–1157 (KLEDHLRNMK) show a composition bias toward basic and acidic residues.

This sequence belongs to the TrbL/VirB6 family.

The protein localises to the cell membrane. This is an uncharacterized protein from Rickettsia bellii (strain RML369-C).